Here is a 318-residue protein sequence, read N- to C-terminus: NLP effector protein 7 (318 aa).

An N-terminal signal peptide occupies residues Met-1 to Ala-19. Positions Gln-23 to Asp-41 are enriched in low complexity. Disordered stretches follow at residues Gln-23–Lys-42 and Arg-51–Pro-96. A compositionally biased stretch (polar residues) spans Pro-55–Pro-65. N-linked (GlcNAc...) asparagine glycosylation is present at Asn-60. A compositionally biased stretch (pro residues) spans Thr-73–Pro-96. The Conserved undecapeptide motif I signature appears at Ala-185–Asp-195. A Hepta-peptide GHRHDWE motif II motif is present at residues Gly-202–Glu-208.

This sequence belongs to the Necrosis inducing protein (NPP1) family.

It is found in the secreted. In terms of biological role, secreted effector that contributes moderately to virulence during infection by P.capsici. Does not cause visible reaction of C.annuum for several days after inoculation, but by 7 days after inoculation, small necrotic lesions become visible. Leads only to chlorotic areas, without necrosis at 7 days after non-host N.benthamiana leaves infection. In Phytophthora capsici, this protein is NLP effector protein 7.